The primary structure comprises 615 residues: Aldehyde oxidase GLOX1 (615 aa).

A signal peptide spans 1 to 25 (MKKSTRLLWLLSIIVLVAAVSKAVA). N-linked (GlcNAc...) asparagine glycosylation is present at asparagine 35. The segment at 70-89 (PPKAGKGKGKGKGRGTVAAG) is disordered. Basic residues predominate over residues 72–82 (KAGKGKGKGKG). Residues asparagine 187 and asparagine 297 are each glycosylated (N-linked (GlcNAc...) asparagine).

It is found in the secreted. The enzyme catalyses an aldehyde + O2 + H2O = a carboxylate + H2O2 + H(+). In terms of biological role, catalyzes the oxidation of aldehydes to the corresponding carboxylate by coupling the reaction to the reduction of dioxygen to hydrogen peroxide. Substrates include glyoxal and other aldehydes. May be regulated by the transcription factor MYB80 during anther development and play a role in tapetum and pollen development. The chain is Aldehyde oxidase GLOX1 from Arabidopsis thaliana (Mouse-ear cress).